The following is a 299-amino-acid chain: MKIIKITPRGFCKGVVDAYATCKKIAKLYPNHEKYLIGWLVHNKEIIKELEELGIQTKDDKNHSRSEIIDSIEIKDKNNPPIVIFSAHGTDQKTIDKAREKGLVVFDTTCIYVTKTHDLIKEKIEQGYQIFYIGVNNHPETISTLSIDKSIILIETVNDIENIRTESEKPIFVTNQTTISIYEFEEITETLKSKYKNIEFKNDICNAAKDRQDAVINMPSEVDLLLVVGDIKSNNSKKLVEIGIKKQIESHLIWNTKNIKDEWFINKKCLAITSGCSTPTWLANYVIIFLEKKLGTAND.

Cysteine 12 lines the [4Fe-4S] cluster pocket. (2E)-4-hydroxy-3-methylbut-2-enyl diphosphate-binding residues include histidine 42 and histidine 88. Dimethylallyl diphosphate contacts are provided by histidine 42 and histidine 88. Isopentenyl diphosphate contacts are provided by histidine 42 and histidine 88. Cysteine 110 contributes to the [4Fe-4S] cluster binding site. (2E)-4-hydroxy-3-methylbut-2-enyl diphosphate is bound at residue histidine 138. Histidine 138 provides a ligand contact to dimethylallyl diphosphate. Residue histidine 138 participates in isopentenyl diphosphate binding. The active-site Proton donor is the glutamate 140. Threonine 177 serves as a coordination point for (2E)-4-hydroxy-3-methylbut-2-enyl diphosphate. Cysteine 205 is a [4Fe-4S] cluster binding site. The (2E)-4-hydroxy-3-methylbut-2-enyl diphosphate site is built by serine 233, asparagine 235, and serine 277. Serine 233, asparagine 235, and serine 277 together coordinate dimethylallyl diphosphate. Serine 233, asparagine 235, and serine 277 together coordinate isopentenyl diphosphate.

The protein belongs to the IspH family. The cofactor is [4Fe-4S] cluster.

It catalyses the reaction isopentenyl diphosphate + 2 oxidized [2Fe-2S]-[ferredoxin] + H2O = (2E)-4-hydroxy-3-methylbut-2-enyl diphosphate + 2 reduced [2Fe-2S]-[ferredoxin] + 2 H(+). The catalysed reaction is dimethylallyl diphosphate + 2 oxidized [2Fe-2S]-[ferredoxin] + H2O = (2E)-4-hydroxy-3-methylbut-2-enyl diphosphate + 2 reduced [2Fe-2S]-[ferredoxin] + 2 H(+). The protein operates within isoprenoid biosynthesis; dimethylallyl diphosphate biosynthesis; dimethylallyl diphosphate from (2E)-4-hydroxy-3-methylbutenyl diphosphate: step 1/1. Its pathway is isoprenoid biosynthesis; isopentenyl diphosphate biosynthesis via DXP pathway; isopentenyl diphosphate from 1-deoxy-D-xylulose 5-phosphate: step 6/6. Its function is as follows. Catalyzes the conversion of 1-hydroxy-2-methyl-2-(E)-butenyl 4-diphosphate (HMBPP) into a mixture of isopentenyl diphosphate (IPP) and dimethylallyl diphosphate (DMAPP). Acts in the terminal step of the DOXP/MEP pathway for isoprenoid precursor biosynthesis. The sequence is that of 4-hydroxy-3-methylbut-2-enyl diphosphate reductase from Malacoplasma penetrans (strain HF-2) (Mycoplasma penetrans).